The sequence spans 303 residues: N-acetyl-D-glucosamine kinase (303 aa).

ATP-binding positions include 4–11 and 133–140; these read GFDIGGTK and GVGGGLIF. Positions 157, 177, 179, and 184 each coordinate Zn(2+).

The protein belongs to the ROK (NagC/XylR) family. NagK subfamily.

The catalysed reaction is N-acetyl-D-glucosamine + ATP = N-acetyl-D-glucosamine 6-phosphate + ADP + H(+). It functions in the pathway cell wall biogenesis; peptidoglycan recycling. Catalyzes the phosphorylation of N-acetyl-D-glucosamine (GlcNAc) derived from cell-wall degradation, yielding GlcNAc-6-P. The sequence is that of N-acetyl-D-glucosamine kinase from Escherichia coli O7:K1 (strain IAI39 / ExPEC).